Here is a 498-residue protein sequence, read N- to C-terminus: Zinc finger protein 682 (498 aa).

Residues 4–75 form the KRAB domain; the sequence is LTFRDVTIEF…KRHETIAKPP (72 aa). 10 C2H2-type zinc fingers span residues 173-195, 201-223, 229-251, 257-279, 285-307, 313-335, 341-363, 369-391, 397-419, and 425-447; these read FKCMQCGKVFKSHSGLSYHKIIH, CICEECGKTFKWFSYLTKHKRIH, YKCEECGKAFNWCSSLTKHKRIH, YKCEECGKAFHWCSPFVRHKKIH, YTCEDCGRAFNRHSHLTKHKTIH, YKCKECGKAFNHCSLLTIHERTH, YKCEECGKAFNSSSILTEHKVIH, YKCEKCDKVFKRFSYLTKHKRIH, YKCEECGKAFNWSSILTEHKRIH, and YNCEECGKAFNRCSHLTRHKKIH. A C2H2-type 11; degenerate zinc finger spans residues 453-475; the sequence is YKCEECGKAFKRCSHLNEHKRVQ.

This sequence belongs to the krueppel C2H2-type zinc-finger protein family.

It is found in the nucleus. In terms of biological role, may be involved in transcriptional regulation. The polypeptide is Zinc finger protein 682 (ZNF682) (Homo sapiens (Human)).